The following is a 410-amino-acid chain: Neuroserpin (410 aa).

An N-terminal signal peptide occupies residues 1 to 16 (MAFLGLFSLLVLQSMA). 3 N-linked (GlcNAc...) asparagine glycosylation sites follow: asparagine 157, asparagine 321, and asparagine 401. An O-linked (Xyl...) (chondroitin sulfate) serine glycan is attached at serine 403.

It belongs to the serpin family. In terms of assembly, monomer. Has a tendency to form large polymers already at 41 and 45 degrees Celsius (in vitro). Detected in brain cortex and hippocampus pyramidal neurons (at protein level). Detected in cerebrospinal fluid (at protein level). Predominantly expressed in the brain.

It is found in the secreted. It localises to the cytoplasmic vesicle. The protein localises to the secretory vesicle lumen. The protein resides in the perikaryon. In terms of biological role, serine protease inhibitor that inhibits plasminogen activators and plasmin but not thrombin. May be involved in the formation or reorganization of synaptic connections as well as for synaptic plasticity in the adult nervous system. May protect neurons from cell damage by tissue-type plasminogen activator. The polypeptide is Neuroserpin (SERPINI1) (Homo sapiens (Human)).